A 322-amino-acid chain; its full sequence is Transcription initiation factor IIB (322 aa).

A run of 2 repeats spans residues 125-213 and 224-305.

Belongs to the TFIIB family.

Stabilizes TBP binding to an archaeal box-A promoter. Also responsible for recruiting RNA polymerase II to the pre-initiation complex (DNA-TBP-TFIIB). This Aeropyrum pernix (strain ATCC 700893 / DSM 11879 / JCM 9820 / NBRC 100138 / K1) protein is Transcription initiation factor IIB.